The chain runs to 266 residues: Putative carbamate hydrolase RutD (266 aa).

It belongs to the AB hydrolase superfamily. Hydrolase RutD family.

The enzyme catalyses carbamate + 2 H(+) = NH4(+) + CO2. Involved in pyrimidine catabolism. May facilitate the hydrolysis of carbamate, a reaction that can also occur spontaneously. This Escherichia coli O7:K1 (strain IAI39 / ExPEC) protein is Putative carbamate hydrolase RutD.